Reading from the N-terminus, the 475-residue chain is Isocitrate dehydrogenase [NADP] (475 aa).

Thr104 contacts NADP(+). D-threo-isocitrate-binding residues include Ser113, Asn115, Arg119, Arg129, and Arg153. Asp362 contacts Mg(2+). Residues 394–400 (HGTAPKH), Asn407, Tyr446, and Arg450 contribute to the NADP(+) site.

This sequence belongs to the isocitrate and isopropylmalate dehydrogenases family. Homodimer. Mg(2+) serves as cofactor. Requires Mn(2+) as cofactor.

The protein resides in the cytoplasm. It catalyses the reaction D-threo-isocitrate + NADP(+) = 2-oxoglutarate + CO2 + NADPH. Inhibited non-competitively by ADP and 2-oxoglutarate, with respect to isocitrate and in a competitive manner by NADPH. Functionally, catalyzes the oxidative decarboxylation of isocitrate to 2-oxoglutarate and carbon dioxide with the concomitant reduction of NADP(+). Is specific for NADP(+), cannot use NAD(+). The polypeptide is Isocitrate dehydrogenase [NADP] (Synechocystis sp. (strain ATCC 27184 / PCC 6803 / Kazusa)).